The sequence spans 493 residues: 3-octaprenyl-4-hydroxybenzoate carboxy-lyase (493 aa).

Asparagine 172 is a Mn(2+) binding site. Residues 175–177 (IYR), 189–191 (RWL), and 194–195 (RG) each bind prenylated FMN. Residue glutamate 238 participates in Mn(2+) binding. Aspartate 287 serves as the catalytic Proton donor.

The protein belongs to the UbiD family. Homohexamer. It depends on prenylated FMN as a cofactor. Mn(2+) serves as cofactor.

It is found in the cell membrane. It carries out the reaction a 4-hydroxy-3-(all-trans-polyprenyl)benzoate + H(+) = a 2-(all-trans-polyprenyl)phenol + CO2. It participates in cofactor biosynthesis; ubiquinone biosynthesis. Its function is as follows. Catalyzes the decarboxylation of 3-octaprenyl-4-hydroxy benzoate to 2-octaprenylphenol, an intermediate step in ubiquinone biosynthesis. This chain is 3-octaprenyl-4-hydroxybenzoate carboxy-lyase, found in Shewanella loihica (strain ATCC BAA-1088 / PV-4).